We begin with the raw amino-acid sequence, 368 residues long: Putative alcohol dehydrogenase D (368 aa).

Positions 40, 61, 91, 94, 97, 105, and 167 each coordinate Zn(2+).

This sequence belongs to the zinc-containing alcohol dehydrogenase family. Zn(2+) is required as a cofactor.

The catalysed reaction is a primary alcohol + NAD(+) = an aldehyde + NADH + H(+). It carries out the reaction a secondary alcohol + NAD(+) = a ketone + NADH + H(+). In terms of biological role, required for maintaining the appropriate mycolic acid composition and permeability of the envelope on its exposure to acidic pH. The chain is Putative alcohol dehydrogenase D (adhD) from Mycobacterium tuberculosis (strain CDC 1551 / Oshkosh).